The following is a 470-amino-acid chain: MNPNQKIITIGSISLGLVVFNVLLHVVSIIVTVLILGRGGNNGICNETVVREYNETVRIEKVTQWHNTSVVEYMPYWNEGTYMNNTEAICDVKGFAPFSKDNGIRIGSRGHVFVIREPFVSCSPTECRTFFLTQGSLLNDKHSNGTVKDRSPFRTLMSVEVGQSPNVYQARFEAVAWSATACHDGKKWMTVGVTGPDSKAVAVVHYGGVPTDVVNSWAGDILRTQESSCTCIQGDCYWVMTDGPANRQAQYRIYKANQGKIVGQTDVSFNGGHIEECSCYPNDGKVECVCRDNWTGTNRPVLVISPDLAYRVGYLCAGLPSDTPRGEDAQFTGSCTSPMGNQGYGVKGFGFRQGTDVWMGRTISRTSRSGFEILRVRNGWTQTSKEQVRKQVVVDNLNWSGYSGSFTLPVELSGKYCLVPCFWVEMIRGKPEEKTIWTSSSSIVMCGVDYEVADWSWHDGAILPFDIDKM.

Topologically, residues 1 to 14 are intravirion; the sequence is MNPNQKIITIGSIS. The segment at 11–32 is involved in apical transport and lipid raft association; sequence GSISLGLVVFNVLLHVVSIIVT. Residues 15 to 35 traverse the membrane as a helical segment; the sequence is LGLVVFNVLLHVVSIIVTVLI. The hypervariable stalk region stretch occupies residues 32-86; that stretch reads TVLILGRGGNNGICNETVVREYNETVRIEKVTQWHNTSVVEYMPYWNEGTYMNNT. At 36–470 the chain is on the virion surface side; the sequence is LGRGGNNGIC…AILPFDIDKM (435 aa). 4 N-linked (GlcNAc...) asparagine; by host glycosylation sites follow: Asn46, Asn54, Asn67, and Asn84. Residues 89–470 are head of neuraminidase; it reads ICDVKGFAPF…AILPFDIDKM (382 aa). Disulfide bonds link Cys90–Cys417, Cys122–Cys127, Cys182–Cys229, Cys231–Cys236, Cys277–Cys290, Cys279–Cys288, Cys316–Cys335, and Cys421–Cys446. Residue Arg116 participates in substrate binding. An N-linked (GlcNAc...) asparagine; by host glycan is attached at Asn144. The Proton donor/acceptor role is filled by Asp149. Substrate is bound at residue Arg150. Residue 275 to 276 coordinates substrate; sequence EE. Residue Arg291 coordinates substrate. A Ca(2+)-binding site is contributed by Asp292. N-linked (GlcNAc...) asparagine; by host glycosylation is present at Asn293. Residues Gly296 and Asp322 each contribute to the Ca(2+) site. Arg368 contacts substrate. Asn398 carries N-linked (GlcNAc...) asparagine; by host glycosylation. The active-site Nucleophile is Tyr402.

This sequence belongs to the glycosyl hydrolase 34 family. Homotetramer. Requires Ca(2+) as cofactor. N-glycosylated.

It localises to the virion membrane. The protein resides in the host apical cell membrane. The catalysed reaction is Hydrolysis of alpha-(2-&gt;3)-, alpha-(2-&gt;6)-, alpha-(2-&gt;8)- glycosidic linkages of terminal sialic acid residues in oligosaccharides, glycoproteins, glycolipids, colominic acid and synthetic substrates.. Its activity is regulated as follows. Inhibited by the neuraminidase inhibitors zanamivir (Relenza) and oseltamivir (Tamiflu). These drugs interfere with the release of progeny virus from infected cells and are effective against all influenza strains. Resistance to neuraminidase inhibitors is quite rare. Catalyzes the removal of terminal sialic acid residues from viral and cellular glycoconjugates. Cleaves off the terminal sialic acids on the glycosylated HA during virus budding to facilitate virus release. Additionally helps virus spread through the circulation by further removing sialic acids from the cell surface. These cleavages prevent self-aggregation and ensure the efficient spread of the progeny virus from cell to cell. Otherwise, infection would be limited to one round of replication. Described as a receptor-destroying enzyme because it cleaves a terminal sialic acid from the cellular receptors. May facilitate viral invasion of the upper airways by cleaving the sialic acid moieties on the mucin of the airway epithelial cells. Likely to plays a role in the budding process through its association with lipid rafts during intracellular transport. May additionally display a raft-association independent effect on budding. Plays a role in the determination of host range restriction on replication and virulence. Sialidase activity in late endosome/lysosome traffic seems to enhance virus replication. This chain is Neuraminidase, found in Aves (Horse).